The chain runs to 151 residues: MGRMHNPGKGISQSALPYRRSVPTWLKLTSEEVQEQVTRLAKKGLRPSQIGVILRDSHGVAQVRRVTGNKIVRILKAKGMAPEIPEDLYHLIKKAVNIRKHLERNRKDKDSKYRLILVESRIHRLARYYKTKRQLPATWKYESSTASALVS.

The protein belongs to the universal ribosomal protein uS15 family.

In Wuchereria bancrofti, this protein is Small ribosomal subunit protein uS15 (RPS13).